The primary structure comprises 113 residues: UPF0342 protein SZO_10960 (113 aa).

This sequence belongs to the UPF0342 family.

This Streptococcus equi subsp. zooepidemicus (strain H70) protein is UPF0342 protein SZO_10960.